The following is a 169-amino-acid chain: Peptide deformylase (169 aa).

Fe cation is bound by residues C91 and H133. The active site involves E134. H137 contacts Fe cation.

Belongs to the polypeptide deformylase family. Requires Fe(2+) as cofactor.

The enzyme catalyses N-terminal N-formyl-L-methionyl-[peptide] + H2O = N-terminal L-methionyl-[peptide] + formate. Functionally, removes the formyl group from the N-terminal Met of newly synthesized proteins. Requires at least a dipeptide for an efficient rate of reaction. N-terminal L-methionine is a prerequisite for activity but the enzyme has broad specificity at other positions. The sequence is that of Peptide deformylase from Aliivibrio salmonicida (strain LFI1238) (Vibrio salmonicida (strain LFI1238)).